The sequence spans 94 residues: ATP synthase subunit c (94 aa).

Transmembrane regions (helical) follow at residues 15–35 and 61–81; these read VSVG…WGLI and GGLM…FIFA.

Belongs to the ATPase C chain family. In terms of assembly, F-type ATPases have 2 components, F(1) - the catalytic core - and F(0) - the membrane proton channel. F(1) has five subunits: alpha(3), beta(3), gamma(1), delta(1), epsilon(1). F(0) has three main subunits: a(1), b(2) and c(10-14). The alpha and beta chains form an alternating ring which encloses part of the gamma chain. F(1) is attached to F(0) by a central stalk formed by the gamma and epsilon chains, while a peripheral stalk is formed by the delta and b chains.

The protein localises to the cell inner membrane. F(1)F(0) ATP synthase produces ATP from ADP in the presence of a proton or sodium gradient. F-type ATPases consist of two structural domains, F(1) containing the extramembraneous catalytic core and F(0) containing the membrane proton channel, linked together by a central stalk and a peripheral stalk. During catalysis, ATP synthesis in the catalytic domain of F(1) is coupled via a rotary mechanism of the central stalk subunits to proton translocation. Functionally, key component of the F(0) channel; it plays a direct role in translocation across the membrane. A homomeric c-ring of between 10-14 subunits forms the central stalk rotor element with the F(1) delta and epsilon subunits. The chain is ATP synthase subunit c from Nitrosococcus oceani (strain ATCC 19707 / BCRC 17464 / JCM 30415 / NCIMB 11848 / C-107).